Here is a 465-residue protein sequence, read N- to C-terminus: Mothers against decapentaplegic homolog 5 (465 aa).

Threonine 2 bears the N-acetylthreonine mark. In terms of domain architecture, MH1 spans 13-137 (PAVKRLLGWK…YKRVESPVLP (125 aa)). Residues cysteine 65, cysteine 110, cysteine 122, and histidine 127 each coordinate Zn(2+). The interval 163 to 249 (NEPHMPQNAT…PMDTSNNMIP (87 aa)) is disordered. The span at 169–182 (QNATFPDSFHQPNN) shows a compositional bias: polar residues. Positions 186 to 197 (PLSPNSPYPPSP) are enriched in pro residues. The segment covering 198–214 (ASSTYPNSPASSGPGSP) has biased composition (low complexity). A compositionally biased stretch (polar residues) spans 234–249 (GQDNSQPMDTSNNMIP). The region spanning 271–465 (WCSIVYYELN…SPLNPISSVS (195 aa)) is the MH2 domain. Phosphoserine is present on residues serine 463 and serine 465.

The protein belongs to the dwarfin/SMAD family. Homodimer. Forms trimers with the co-SMAD SMAD4. Interacts with PEBP2-alpha subunit and SMURF1. Interacts with SUV39H1 and SUV39H2. Interacts (via MH2 domain) with LEMD3. Interacts with WWP1. Interacts with TMEM119. Interacts with ZNF8. Interacts with RANBP3L. Interacts with HK1. Interacts with HGS; this interaction attenuates BMP signaling. Phosphorylated on serine by BMP (bone morphogenetic proteins) type 1 receptor kinase. In terms of processing, ubiquitin-mediated proteolysis by SMAD-specific E3 ubiquitin ligase SMURF1. As to expression, ubiquitous.

It localises to the cytoplasm. The protein resides in the nucleus. It is found in the mitochondrion. Functionally, transcriptional regulator that plays a role in various cellular processes including embryonic development, cell differentiation, angiogenesis and tissue homeostasis. Upon BMP ligand binding to their receptors at the cell surface, is phosphorylated by activated type I BMP receptors (BMPRIs) and associates with SMAD4 to form a heteromeric complex which translocates into the nucleus acting as transcription factor. In turn, the hetero-trimeric complex recognizes cis-regulatory elements containing Smad Binding Elements (SBEs) to modulate the outcome of the signaling network. Non-phosphorylated SMAD5 has a cytoplasmic role in energy metabolism regulation by promoting mitochondrial respiration and glycolysis in response to cytoplasmic pH changes. Mechanistically, interacts with hexokinase 1/HK1 and thereby accelerates glycolysis. The chain is Mothers against decapentaplegic homolog 5 (SMAD5) from Homo sapiens (Human).